The following is a 968-amino-acid chain: RNA polymerase-associated protein RapA (968 aa).

The Helicase ATP-binding domain occupies Asp164 to Ser334. Asp177–Thr184 contributes to the ATP binding site. Residues Asp280 to His283 carry the DEAH box motif. The Helicase C-terminal domain occupies Arg490–Asp644.

The protein belongs to the SNF2/RAD54 helicase family. RapA subfamily. Interacts with the RNAP. Has a higher affinity for the core RNAP than for the holoenzyme. Its ATPase activity is stimulated by binding to RNAP.

Transcription regulator that activates transcription by stimulating RNA polymerase (RNAP) recycling in case of stress conditions such as supercoiled DNA or high salt concentrations. Probably acts by releasing the RNAP, when it is trapped or immobilized on tightly supercoiled DNA. Does not activate transcription on linear DNA. Probably not involved in DNA repair. This chain is RNA polymerase-associated protein RapA, found in Citrobacter koseri (strain ATCC BAA-895 / CDC 4225-83 / SGSC4696).